The following is a 78-amino-acid chain: Short neurotoxin SNTX26 (78 aa).

A signal peptide spans 1–21 (MKTLLLTFLVVTIVCLDLGYT). 4 disulfides stabilise this stretch: Cys-24-Cys-40, Cys-33-Cys-58, Cys-62-Cys-70, and Cys-71-Cys-76.

This sequence belongs to the three-finger toxin family. Short-chain subfamily. In terms of tissue distribution, expressed by the venom gland.

The protein resides in the secreted. Functionally, this three-finger toxin binds and inhibits the nicotinic acetylcholine receptor (nAChR). The polypeptide is Short neurotoxin SNTX26 (Ophiophagus hannah (King cobra)).